The chain runs to 405 residues: Arrestin red cell isoform 2 (405 aa).

It belongs to the arrestin family.

The protein resides in the cytoplasm. The protein is Arrestin red cell isoform 2 of Oncorhynchus mykiss (Rainbow trout).